A 313-amino-acid chain; its full sequence is E3 ubiquitin-protein ligase SINA-like 2 (313 aa).

A disordered region spans residues 1-26 (MSGEASTSRRKRQRVPSSVESVENGG). The RING-type zinc-finger motif lies at 44 to 80 (CPICCHALTSPIFQCDNGHIACSSCCTKLRNKCPSCA). The segment at 94–277 (VVEAVMVTCP…LKMEICIRKL (184 aa)) is SBD. The SIAH-type zinc finger occupies 97–155 (AVMVTCPNVKHGCTEKFSYGKELIHEKDCRFALCYCPAPNCNYSGVYKDLYSHFYVNHY). Residues cysteine 102, cysteine 109, histidine 121, cysteine 125, cysteine 132, cysteine 137, histidine 149, and histidine 154 each coordinate Zn(2+). The segment at 278-313 (KKDEEEADEDEESEEEEDDDDDDDDDDEEEDADEEE) is disordered. Residues 282–313 (EEADEDEESEEEEDDDDDDDDDDEEEDADEEE) are compositionally biased toward acidic residues.

It belongs to the SINA (Seven in absentia) family.

The catalysed reaction is S-ubiquitinyl-[E2 ubiquitin-conjugating enzyme]-L-cysteine + [acceptor protein]-L-lysine = [E2 ubiquitin-conjugating enzyme]-L-cysteine + N(6)-ubiquitinyl-[acceptor protein]-L-lysine.. Its pathway is protein modification; protein ubiquitination. In terms of biological role, E3 ubiquitin-protein ligase that mediates ubiquitination and subsequent proteasomal degradation of target proteins. E3 ubiquitin ligases accept ubiquitin from an E2 ubiquitin-conjugating enzyme in the form of a thioester and then directly transfers the ubiquitin to targeted substrates. It probably triggers the ubiquitin-mediated degradation of different substrates. The polypeptide is E3 ubiquitin-protein ligase SINA-like 2 (Arabidopsis thaliana (Mouse-ear cress)).